A 344-amino-acid polypeptide reads, in one-letter code: Phenylalanine--tRNA ligase alpha subunit (344 aa).

Glu-269 serves as a coordination point for Mg(2+).

The protein belongs to the class-II aminoacyl-tRNA synthetase family. Phe-tRNA synthetase alpha subunit type 1 subfamily. In terms of assembly, tetramer of two alpha and two beta subunits. It depends on Mg(2+) as a cofactor.

The protein localises to the cytoplasm. The enzyme catalyses tRNA(Phe) + L-phenylalanine + ATP = L-phenylalanyl-tRNA(Phe) + AMP + diphosphate + H(+). In Ralstonia pickettii (strain 12J), this protein is Phenylalanine--tRNA ligase alpha subunit.